The primary structure comprises 404 residues: Formate-dependent phosphoribosylglycinamide formyltransferase (404 aa).

N(1)-(5-phospho-beta-D-ribosyl)glycinamide-binding positions include 25–26 and Glu85; that span reads EL. ATP-binding positions include Arg118, Lys159, 164–169, 199–202, and Glu207; these read SSGKGQ and EGFI. Positions 123–318 constitute an ATP-grasp domain; that stretch reads RLAAEELGLP…EFELHARAIL (196 aa). Residues Glu277 and Glu289 each contribute to the Mg(2+) site. N(1)-(5-phospho-beta-D-ribosyl)glycinamide contacts are provided by residues Asp296, Lys365, and 372-373; that span reads RR. Residues 384 to 404 are disordered; the sequence is TDEARSRAKQAAAAVRPVSAK. Over residues 392-404 the composition is skewed to low complexity; the sequence is KQAAAAVRPVSAK.

This sequence belongs to the PurK/PurT family. As to quaternary structure, homodimer.

The catalysed reaction is N(1)-(5-phospho-beta-D-ribosyl)glycinamide + formate + ATP = N(2)-formyl-N(1)-(5-phospho-beta-D-ribosyl)glycinamide + ADP + phosphate + H(+). Its pathway is purine metabolism; IMP biosynthesis via de novo pathway; N(2)-formyl-N(1)-(5-phospho-D-ribosyl)glycinamide from N(1)-(5-phospho-D-ribosyl)glycinamide (formate route): step 1/1. Functionally, involved in the de novo purine biosynthesis. Catalyzes the transfer of formate to 5-phospho-ribosyl-glycinamide (GAR), producing 5-phospho-ribosyl-N-formylglycinamide (FGAR). Formate is provided by PurU via hydrolysis of 10-formyl-tetrahydrofolate. The chain is Formate-dependent phosphoribosylglycinamide formyltransferase from Paraburkholderia xenovorans (strain LB400).